We begin with the raw amino-acid sequence, 529 residues long: Bifunctional purine biosynthesis protein PurH (529 aa).

The MGS-like domain maps to 1–148 (MQQPRPIRRA…KNHKDVAIVV (148 aa)).

This sequence belongs to the PurH family.

The enzyme catalyses (6R)-10-formyltetrahydrofolate + 5-amino-1-(5-phospho-beta-D-ribosyl)imidazole-4-carboxamide = 5-formamido-1-(5-phospho-D-ribosyl)imidazole-4-carboxamide + (6S)-5,6,7,8-tetrahydrofolate. It carries out the reaction IMP + H2O = 5-formamido-1-(5-phospho-D-ribosyl)imidazole-4-carboxamide. It participates in purine metabolism; IMP biosynthesis via de novo pathway; 5-formamido-1-(5-phospho-D-ribosyl)imidazole-4-carboxamide from 5-amino-1-(5-phospho-D-ribosyl)imidazole-4-carboxamide (10-formyl THF route): step 1/1. The protein operates within purine metabolism; IMP biosynthesis via de novo pathway; IMP from 5-formamido-1-(5-phospho-D-ribosyl)imidazole-4-carboxamide: step 1/1. The protein is Bifunctional purine biosynthesis protein PurH of Serratia proteamaculans (strain 568).